The chain runs to 244 residues: MAIKGPRKHLKRLAAPANWQLPRKVKAFTVRPSPGPHSMDKSLPLLLVVRDVLKYADNAREAKKIIQTGKILIDGLKRKEYKHPAGLMDVLSIPEMDENYLVLFDESGRISLKKTDKTDAKLCKIVNKTVIKGGHIQLNLHDGRNQIVKVSDATKAEEDVYKTGDSVLVSIPEQSIVGHVAFGEGKLAYVTGGKHVGEFAKIVEVENRALYSDIVTLENKDGEKFKTVKPYVFIVGQDEPVISM.

Residues 43-106 (LPLLLVVRDV…DENYLVLFDE (64 aa)) form the S4 RNA-binding domain.

Belongs to the eukaryotic ribosomal protein eS4 family.

This is Small ribosomal subunit protein eS4 from Methanococcus maripaludis (strain C7 / ATCC BAA-1331).